Reading from the N-terminus, the 196-residue chain is MGRRKIEIKRIENKSSRQVTFSKRRNGLIDKARQLSILCESSVAVVVVSASGKLYDSSSGDDISKIIDRYEIQHADELRALDLEEKIQNYLPHKELLETVQSKLEEPNVDNVSVDSLISLEEQLETALSVSRARKAELMMEYIESLKEKEKLLREENQVLASQMGKNTLLATDDERGMFPGSSSGNKIPETLPLLN.

An MADS-box domain is found at 1-61; it reads MGRRKIEIKR…GKLYDSSSGD (61 aa). Residues 80–170 enclose the K-box domain; sequence ALDLEEKIQN…ASQMGKNTLL (91 aa). A disordered region spans residues 175–196; it reads ERGMFPGSSSGNKIPETLPLLN.

In terms of assembly, interacts with AGL39, AGL97 and AGL74. In terms of tissue distribution, expressed in most plant tissues, embryo, seedlings, roots, leaves, stems, inflorescence, pollen, siliques and flowers.

The protein localises to the nucleus. Probable transcription factor involved in the negative regulation of flowering time in both long and short days, probably through the photoperiodic and vernalization pathways. Prevents premature flowering. The sequence is that of Agamous-like MADS-box protein AGL27 (AGL27) from Arabidopsis thaliana (Mouse-ear cress).